The primary structure comprises 532 residues: CTP synthase (532 aa).

Positions 1 to 267 are amidoligase domain; that stretch reads MTKYIFVTGG…DDIVLEHLQL (267 aa). Residue Ser-13 coordinates CTP. Ser-13 is a binding site for UTP. Position 14–19 (14–19) interacts with ATP; it reads SIGKGI. Tyr-54 is an L-glutamine binding site. Asp-71 serves as a coordination point for ATP. Mg(2+) is bound by residues Asp-71 and Glu-141. Residues 148–150, 188–193, and Lys-224 contribute to the CTP site; these read DIE and KTKPTQ. Residues 188-193 and Lys-224 contribute to the UTP site; that span reads KTKPTQ. Residues 292–532 enclose the Glutamine amidotransferase type-1 domain; sequence RIGLVGKYVS…DFVGAALNNK (241 aa). Position 354 (Gly-354) interacts with L-glutamine. Catalysis depends on Cys-381, which acts as the Nucleophile; for glutamine hydrolysis. Residues 382-385, Glu-405, and Arg-462 each bind L-glutamine; that span reads LGMQ. Active-site residues include His-507 and Glu-509.

The protein belongs to the CTP synthase family. As to quaternary structure, homotetramer.

It carries out the reaction UTP + L-glutamine + ATP + H2O = CTP + L-glutamate + ADP + phosphate + 2 H(+). The catalysed reaction is L-glutamine + H2O = L-glutamate + NH4(+). It catalyses the reaction UTP + NH4(+) + ATP = CTP + ADP + phosphate + 2 H(+). It participates in pyrimidine metabolism; CTP biosynthesis via de novo pathway; CTP from UDP: step 2/2. Allosterically activated by GTP, when glutamine is the substrate; GTP has no effect on the reaction when ammonia is the substrate. The allosteric effector GTP functions by stabilizing the protein conformation that binds the tetrahedral intermediate(s) formed during glutamine hydrolysis. Inhibited by the product CTP, via allosteric rather than competitive inhibition. In terms of biological role, catalyzes the ATP-dependent amination of UTP to CTP with either L-glutamine or ammonia as the source of nitrogen. Regulates intracellular CTP levels through interactions with the four ribonucleotide triphosphates. The protein is CTP synthase of Listeria monocytogenes serotype 4b (strain F2365).